A 524-amino-acid chain; its full sequence is 56 kDa type-specific antigen (524 aa).

The signal sequence occupies residues 1–22 (MKKIMLIASAMSALSLPFSASA). A helical membrane pass occupies residues 67–87 (LTTGLPFGGTLAAGMTIAPGF). Disordered stretches follow at residues 112 to 132 (SKGE…RKRF) and 387 to 422 (EKLA…KGKE). Basic and acidic residues-rich tracts occupy residues 395–405 (EDAKNQGEGDC) and 413–422 (EKSKEGKGKE). The helical transmembrane segment at 472–492 (TGMVASGALGVAINAAEGVYV) threads the bilayer.

The protein localises to the cell membrane. Its function is as follows. May be an adherent factor for rickettsial adsorption to the host-cell surface and a determinant of virulence of individual rickettsial strain. It is the major outer membrane protein. The sequence is that of 56 kDa type-specific antigen from Orientia tsutsugamushi (Rickettsia tsutsugamushi).